The sequence spans 623 residues: ATP-dependent lipid A-core flippase (623 aa).

5 consecutive transmembrane segments (helical) span residues 66–86 (LVLA…LAVI), 103–123 (VWFL…CNFF), 190–210 (LVVI…TLII), 290–310 (LTPL…AVAL), and 317–337 (ALTV…FDPI). Residues 67–349 (VLAVLLMAGA…LTNLAGKMQK (283 aa)) enclose the ABC transmembrane type-1 domain. One can recognise an ABC transporter domain in the interval 382 to 618 (VEFRAVSHRF…NGLYASLYNM (237 aa)). ATP is bound at residue 416-423 (GRSGSGKT).

It belongs to the ABC transporter superfamily. Lipid exporter (TC 3.A.1.106) family. Homodimer.

It is found in the cell inner membrane. The enzyme catalyses ATP + H2O + lipid A-core oligosaccharideSide 1 = ADP + phosphate + lipid A-core oligosaccharideSide 2.. In terms of biological role, involved in lipopolysaccharide (LPS) biosynthesis. Translocates lipid A-core from the inner to the outer leaflet of the inner membrane. Transmembrane domains (TMD) form a pore in the inner membrane and the ATP-binding domain (NBD) is responsible for energy generation. The polypeptide is ATP-dependent lipid A-core flippase (Bordetella bronchiseptica (strain ATCC BAA-588 / NCTC 13252 / RB50) (Alcaligenes bronchisepticus)).